A 551-amino-acid chain; its full sequence is Protein PLASTID TRANSCRIPTIONALLY ACTIVE 12, chloroplastic (551 aa).

A chloroplast-targeting transit peptide spans 1–47 (MASCSRTWLLPGMAPQATAQTVPRPLQSLKVFAGLPHRRRVLFSGVS). Disordered regions lie at residues 76 to 161 (SSYF…EGES) and 463 to 529 (HSYN…DQLS). The segment covering 109–119 (RVRAARAPAPV) has biased composition (low complexity). Acidic residues-rich tracts occupy residues 467-476 (EDSDDDEEDA) and 485-498 (SLED…DAED). Positions 505 to 516 (RNWSVLKTTGQA) are enriched in polar residues. The segment covering 518–529 (NPKEKSKKDQLS) has biased composition (basic and acidic residues).

As to quaternary structure, component of the plastid-encoded plastid RNA polymerase (PEP) complex.

Its subcellular location is the plastid. The protein resides in the chloroplast. Functionally, required for the activity of the plastid-encoded RNA polymerase (PEP) and full expression of genes transcribed by PEP. Required for the proper build-up and formation of the PEP-complex. Binds single-stranded (ss) DNA and RNA, but not double-stranded (ds) DNA. This Oryza sativa subsp. japonica (Rice) protein is Protein PLASTID TRANSCRIPTIONALLY ACTIVE 12, chloroplastic.